A 241-amino-acid chain; its full sequence is Ribosome-recycling factor, mitochondrial (241 aa).

Belongs to the RRF family.

It localises to the mitochondrion. Its function is as follows. Necessary for protein synthesis in mitochondria. Functions as a ribosome recycling factor in mitochondria. This is Ribosome-recycling factor, mitochondrial (RRF1) from Kluyveromyces lactis (strain ATCC 8585 / CBS 2359 / DSM 70799 / NBRC 1267 / NRRL Y-1140 / WM37) (Yeast).